The following is a 58-amino-acid chain: Cecropin-B (58 aa).

Residues 1–21 (ILSFVFACLLALSAVSAAPEP) form the signal peptide.

It belongs to the cecropin family.

It is found in the secreted. In terms of biological role, cecropins have lytic and antibacterial activity against several Gram-positive and Gram-negative bacteria. In Spodoptera litura (Asian cotton leafworm), this protein is Cecropin-B (CECB).